Reading from the N-terminus, the 320-residue chain is Beta-carotene 4-ketolase 3 (320 aa).

It carries out the reaction echinenone + 2 AH2 + 2 O2 = canthaxanthin + 2 A + 3 H2O. It catalyses the reaction all-trans-beta-carotene + 2 AH2 + 2 O2 = echinenone + 2 A + 3 H2O. Its pathway is carotenoid biosynthesis. Functionally, involved in the biosynthesis of ketocarotenoids which are powerful anti-oxidative molecules. Catalyzes the conversion of beta-carotene to canthaxanthin via echinenone. This is Beta-carotene 4-ketolase 3 from Haematococcus lacustris (Green alga).